The following is a 719-amino-acid chain: Homeobox protein SIX5 (719 aa).

2 stretches are compositionally biased toward low complexity: residues 1–22 (MATS…AAAT) and 31–65 (QLLQ…GPGS). Disordered stretches follow at residues 1 to 73 (MATS…VTEV) and 241 to 287 (WFKN…VASM). A DNA-binding region (homeobox) is located at residues 194–253 (GEETVYCFKERSRAALKACYRGNRYPTPDEKRRLATLTGLSLTQVSNWFKNRRQRDRTGT). The segment covering 272-282 (ESSRSPEDLER) has biased composition (basic and acidic residues).

The protein belongs to the SIX/Sine oculis homeobox family. Probably binds DNA dimer. Interacts with EYA3, and probably EYA1 and EYA2.

The protein resides in the nucleus. Transcription factor that is thought to be involved in regulation of organogenesis. May be involved in determination and maintenance of retina formation. Binds a 5'-GGTGTCAG-3' motif present in the ARE regulatory element of ATP1A1. Binds a 5'-TCA[AG][AG]TTNC-3' motif present in the MEF3 element in the myogenin promoter, and in the IGFBP5 promoter. Thought to be regulated by association with Dach and Eya proteins, and seems to be coactivated by EYA1, EYA2 and EYA3. This chain is Homeobox protein SIX5 (Six5), found in Mus musculus (Mouse).